Consider the following 100-residue polypeptide: MVERLSAEARASALRDLSGWAELDGREAISRTFTFRDFNEAFGFMTRVALIAEKRDHHPEWRNVYRTVEVVLATHDAGGVTMLDIELARAMDAIAAAISG.

This sequence belongs to the pterin-4-alpha-carbinolamine dehydratase family.

The enzyme catalyses (4aS,6R)-4a-hydroxy-L-erythro-5,6,7,8-tetrahydrobiopterin = (6R)-L-erythro-6,7-dihydrobiopterin + H2O. In Bradyrhizobium sp. (strain ORS 278), this protein is Putative pterin-4-alpha-carbinolamine dehydratase.